Consider the following 287-residue polypeptide: Protease HtpX (287 aa).

2 helical membrane passes run 4–24 and 33–53; these read IFLLIATNFAILLVASIVMSI and GGLLVFAAIFGFGGSFISLAI. Residue H139 coordinates Zn(2+). Residue E140 is part of the active site. H143 is a Zn(2+) binding site. A run of 2 helical transmembrane segments spans residues 154-174 and 195-215; these read LIQGVVNTFVIFAARVVAGII and AVVFVLDMLFGILASMIVAYF. E220 lines the Zn(2+) pocket.

This sequence belongs to the peptidase M48B family. Zn(2+) serves as cofactor.

It localises to the cell inner membrane. The protein is Protease HtpX of Shewanella frigidimarina (strain NCIMB 400).